A 1101-amino-acid polypeptide reads, in one-letter code: MDCKVHMETTVSRPVLSPTHINATASETFTVLQQRMRIVEEQTSSLRDDLIMLDFGEKRGYLEAPDCLEDLDSQKVISPIQNEAICAGKTDILWKNCEFLVNRMCRLESLMQSLKMNIFRLQTEKDLNPQKTAFLKDRLNAIQEEHSKDLKLLHLEVMNLRQQLRAVKEEEDKAQDEVQRLTATLKIASQTKKNAAIIEEELKTTKRKMNLKIQELRRQLAQEKYLRESLEKSASAMLLKIQEMGSTVEVERKQVHILQQNCIALRDSIQSAQELLAQEQKKKEELEIATSQLKSDLTSRDDLISKLVEENKNLQISFNKEHEENAYLRSEIMSLHEASEKAQVLNDQLTKKCSELSCMLQTVTMEKARIIADHQAILQVEQKMMTQTFQEQNLLLDAAHASITNELQTVQNEKTQLQAHLDHLILEHNQCIQKAQDAEKRTAVQKELLESTIARLRGELEASMQEKKSLLEEKERFQREVNKTEKEIVQERCNLEKELAKNKVDINTLTHNLQTLEEENKHLADQMASLELQQVTSDYHGLAQQKVEKITESKNKLAYENGKLQIKVKQLEEQVQSFTDTSLQNDHLRKMNKYLQTKYAQANSELSAKRVHLQQADAHLKEVKSILERSKEELSRTVKCRNAALKESQKLKEDLEAVEDRENKKVGNFQRQLAEAKEDNCKVTIMLENVLASHSKMQGALEKVQIELGRRDSEIAGLKKERDLNQQRVQKLEAEVDQWQARMLVMEDQHNSEIESLQKALGVAREDNRKLAMSLEQALQTNNHLQTKLDHIQEQLESKELERQNLETFKDRMTEESKVEAELHAERIEALRKQFQTERETTKKVAQREVAELKKALDEANFRSVEVSRTNRELRQKLAELEKILESNKEKIKNQKTQIKLHLSAKANNAQNIERMKQIEKELKQMELIKDQYQKKNYEQSLSIQRFVCEMTNLQKEMQMLAKSQYDASVRNKQQELHLEAERKIRQELENRCQELEETVRHLKKCKEATENTLKEASVESEQITANLEEAHRWFKHRFDGLQLELTKNRLQRPSGEDRWQEKDQDVKHDVMSNQSVLHRWERKQNLRPMPKKYHSEVQRK.

Coiled coils occupy residues 106 to 299, 398 to 680, 712 to 940, and 970 to 1033; these read RLES…DLTS, AAHA…KEDN, DSEI…NYEQ, and VRNK…EAHR. Residues 1055–1071 are compositionally biased toward basic and acidic residues; the sequence is SGEDRWQEKDQDVKHDV. The segment at 1055–1101 is disordered; the sequence is SGEDRWQEKDQDVKHDVMSNQSVLHRWERKQNLRPMPKKYHSEVQRK.

This is Coiled-coil domain-containing protein 150 (CCDC150) from Homo sapiens (Human).